A 675-amino-acid polypeptide reads, in one-letter code: Methionine--tRNA ligase (675 aa).

The 'HIGH' region signature appears at 15 to 25; that stretch reads PYANGSIHLGH. Zn(2+) is bound by residues Cys-146, Cys-149, Cys-159, and Cys-162. Positions 332-336 match the 'KMSKS' region motif; the sequence is KMSKS. Lys-335 is an ATP binding site. The 102-residue stretch at 574 to 675 folds into the tRNA-binding domain; the sequence is DFAKLDLRIA…AGAKPGMRVK (102 aa).

Belongs to the class-I aminoacyl-tRNA synthetase family. MetG type 1 subfamily. In terms of assembly, homodimer. Requires Zn(2+) as cofactor.

It localises to the cytoplasm. It carries out the reaction tRNA(Met) + L-methionine + ATP = L-methionyl-tRNA(Met) + AMP + diphosphate. Functionally, is required not only for elongation of protein synthesis but also for the initiation of all mRNA translation through initiator tRNA(fMet) aminoacylation. The chain is Methionine--tRNA ligase from Tolumonas auensis (strain DSM 9187 / NBRC 110442 / TA 4).